The chain runs to 596 residues: Ubiquilin-4 (596 aa).

The Ubiquitin-like domain occupies 13–87 (IRVTVKTPKD…VHLVIKTPQK (75 aa)). Residues Lys23 and Lys62 each participate in a glycyl lysine isopeptide (Lys-Gly) (interchain with G-Cter in SUMO2) cross-link. The tract at residues 89-148 (QDPVTAAASPPSTPDSASAPSTTPASPAAAPVQPCSSGNTTSDAGSGGGPSPVAAEGPSS) is disordered. Composition is skewed to low complexity over residues 93-119 (TAAA…AAAP) and 139-148 (SPVAAEGPSS). A Phosphoserine modification is found at Ser139. STI1 domains are found at residues 187-224 (NPEM…QQLM) and 225-256 (ERNP…MQEM). A Phosphothreonine modification is found at Thr282. Residues 297–361 (GNNPFSSLAG…QVHPTVSNPF (65 aa)) are disordered. The span at 302–313 (SSLAGNSDNSSS) shows a compositional bias: low complexity. Phosphoserine is present on Ser313. The segment covering 324–335 (LPNPWSPSPPTS) has biased composition (pro residues). Over residues 339–349 (GSGGEGTGGSG) the composition is skewed to gly residues. Residues 352–361 (QVHPTVSNPF) are compositionally biased toward polar residues. 2 consecutive STI1 domains span residues 388–435 (NPQL…QEQL) and 439–471 (LPVF…QQGL). The interval 482–528 (VPSLGSFGTPRTSVPLAGSNSGSSAEAPTSSPGVPATSPPSAGSNAQ) is disordered. Over residues 499 to 513 (GSNSGSSAEAPTSSP) the composition is skewed to polar residues. A UBA domain is found at 548–593 (PMPEVRFQQQLEQLNSMGFINREANLQALIATGGDINAAIERLLGS).

As to quaternary structure, homooligomer. Binds signal sequences of proteins that are targeted to the endoplasmic reticulum. Interacts (via UBA domain) with GJA1 (not ubiquitinated) and with ubiquitin; both compete for the same binding site. Interacts (via UBA domain) with ubiquitin and with polyubiquitin chains. Interacts (via ubiquitin-like domain) with PSMD2 and PSMD4, regulatory subunits of the 26S proteasome. Interacts with ATXN1/SCA1; interaction with ATXN1 inhibits polyubiquitination of UBQLN4 and interferes with PSMD4 binding. Interacts with HERPUD1. Interacts (via ubiquitin-like domain) with UBQLN1 (via UBA domain). Interacts with UBQLN2. Interacts (via STI1 1 and 2 domains) with MAP1LC3A/B/C. Interacts with BAG6. Interacts with MRE11 (when ubiquitinated); interaction with ubiquitinated MRE11 leads to MRE11 removal from chromatin. Interacts with DESI1/POST; leading to nuclear export. Interacts with BCL2A1 and BCL2L10. In terms of processing, phosphorylated by ATM at Ser-313 in response to DNA damage, leading to localization in the nucleus and recruitment to sites of DNA damage. Ubiquitinated; this does not lead to proteasomal degradation. May undergo both 'Lys-48'- and 'Lys-63'-linked polyubiquitination. Detected in testis, ovary, thyroid, kidney, thymus, heart, liver, lung and spleen (at protein level). Highly expressed in heart, skeletal muscle, kidney, liver and brain. Detected at lower levels in testis, lung and spleen.

The protein resides in the nucleus. It is found in the cytoplasm. It localises to the chromosome. Its subcellular location is the endoplasmic reticulum. The protein localises to the perinuclear region. The protein resides in the cytoplasmic vesicle. It is found in the autophagosome. Functionally, regulator of protein degradation that mediates the proteasomal targeting of misfolded, mislocalized or accumulated proteins. Acts by binding polyubiquitin chains of target proteins via its UBA domain and by interacting with subunits of the proteasome via its ubiquitin-like domain. Key regulator of DNA repair that represses homologous recombination repair: in response to DNA damage, recruited to sites of DNA damage following phosphorylation by ATM and acts by binding and removing ubiquitinated MRE11 from damaged chromatin, leading to MRE11 degradation by the proteasome. MRE11 degradation prevents homologous recombination repair, redirecting double-strand break repair toward non-homologous end joining (NHEJ). Specifically recognizes and binds mislocalized transmembrane-containing proteins and targets them to proteasomal degradation. Collaborates with DESI1/POST in the export of ubiquitinated proteins from the nucleus to the cytoplasm. Plays a role in the regulation of the proteasomal degradation of non-ubiquitinated GJA1. Acts as an adapter protein that recruits UBQLN1 to the autophagy machinery. Mediates the association of UBQLN1 with autophagosomes and the autophagy-related protein LC3 (MAP1LC3A/B/C) and may assist in the maturation of autophagosomes to autolysosomes by mediating autophagosome-lysosome fusion. This is Ubiquilin-4 from Mus musculus (Mouse).